A 332-amino-acid chain; its full sequence is Holliday junction branch migration complex subunit RuvB (332 aa).

The segment at 1 to 181 (MARILDNDVM…FGITGHMEYY (181 aa)) is large ATPase domain (RuvB-L). ATP contacts are provided by residues L20, R21, G62, K65, T66, T67, 128–130 (EDF), R171, Y181, and R218. T66 provides a ligand contact to Mg(2+). The segment at 182 to 252 (QEKDLTEIVE…ITDRALTMLD (71 aa)) is small ATPAse domain (RuvB-S). The segment at 255-332 (REGLDYIDQK…RHLGYPYQNT (78 aa)) is head domain (RuvB-H). DNA contacts are provided by R291, R310, R312, and R315.

The protein belongs to the RuvB family. In terms of assembly, homohexamer. Forms an RuvA(8)-RuvB(12)-Holliday junction (HJ) complex. HJ DNA is sandwiched between 2 RuvA tetramers; dsDNA enters through RuvA and exits via RuvB. An RuvB hexamer assembles on each DNA strand where it exits the tetramer. Each RuvB hexamer is contacted by two RuvA subunits (via domain III) on 2 adjacent RuvB subunits; this complex drives branch migration. In the full resolvosome a probable DNA-RuvA(4)-RuvB(12)-RuvC(2) complex forms which resolves the HJ.

It localises to the cytoplasm. The catalysed reaction is ATP + H2O = ADP + phosphate + H(+). The RuvA-RuvB-RuvC complex processes Holliday junction (HJ) DNA during genetic recombination and DNA repair, while the RuvA-RuvB complex plays an important role in the rescue of blocked DNA replication forks via replication fork reversal (RFR). RuvA specifically binds to HJ cruciform DNA, conferring on it an open structure. The RuvB hexamer acts as an ATP-dependent pump, pulling dsDNA into and through the RuvAB complex. RuvB forms 2 homohexamers on either side of HJ DNA bound by 1 or 2 RuvA tetramers; 4 subunits per hexamer contact DNA at a time. Coordinated motions by a converter formed by DNA-disengaged RuvB subunits stimulates ATP hydrolysis and nucleotide exchange. Immobilization of the converter enables RuvB to convert the ATP-contained energy into a lever motion, pulling 2 nucleotides of DNA out of the RuvA tetramer per ATP hydrolyzed, thus driving DNA branch migration. The RuvB motors rotate together with the DNA substrate, which together with the progressing nucleotide cycle form the mechanistic basis for DNA recombination by continuous HJ branch migration. Branch migration allows RuvC to scan DNA until it finds its consensus sequence, where it cleaves and resolves cruciform DNA. The polypeptide is Holliday junction branch migration complex subunit RuvB (Streptococcus pyogenes serotype M12 (strain MGAS9429)).